The primary structure comprises 179 residues: Large ribosomal subunit protein uL6 (179 aa).

It belongs to the universal ribosomal protein uL6 family. As to quaternary structure, part of the 50S ribosomal subunit.

Functionally, this protein binds to the 23S rRNA, and is important in its secondary structure. It is located near the subunit interface in the base of the L7/L12 stalk, and near the tRNA binding site of the peptidyltransferase center. This Pseudomonas savastanoi pv. phaseolicola (strain 1448A / Race 6) (Pseudomonas syringae pv. phaseolicola (strain 1448A / Race 6)) protein is Large ribosomal subunit protein uL6.